A 1416-amino-acid chain; its full sequence is Tiny macrocysts protein B (1416 aa).

Transmembrane regions (helical) follow at residues 47–67 (ILTI…GFKH), 93–113 (FGYL…ILGF), 140–160 (FVSF…LIGL), 185–205 (ANLP…IVAF), 231–251 (VTVL…DFVP), 253–273 (LTSI…IIVL), 285–305 (SGFY…MGIN), and 315–335 (ITIV…MFYF). The segment covering 356–372 (LKDANKKGKRNSVEKES) has biased composition (basic and acidic residues). Disordered regions lie at residues 356-377 (LKDA…PTSK) and 662-691 (IEKS…RRGK). 2 consecutive transmembrane segments (helical) span residues 706-726 (WLMI…LVVF) and 953-973 (AILY…AVLF). Disordered stretches follow at residues 1018–1103 (RDNL…RPLM) and 1119–1144 (NVRL…ATRT). Positions 1024-1039 (TTDDDGRDDHLGEDDN) are enriched in acidic residues. Low complexity-rich tracts occupy residues 1048-1062 (NNNN…NNNN) and 1083-1094 (SSSGSNVLNTSS). A compositionally biased stretch (basic and acidic residues) spans 1123–1144 (QAKDEEITNGGGERKGSDATRT). The next 3 membrane-spanning stretches (helical) occupy residues 1179 to 1199 (ILAT…TFTV), 1325 to 1345 (WFLA…FTYF), and 1358 to 1378 (VLTA…VVLF).

The protein resides in the membrane. In terms of biological role, regulator of the cAMP signaling pathway specific to sexual development. Controls the levels of external cAMP by regulating the expression of phosphodiesterase pdsA and its inhibitor pdiA. This Dictyostelium discoideum (Social amoeba) protein is Tiny macrocysts protein B (tmcB).